The chain runs to 171 residues: MTKQHAFTREDLLRCSRGELFGPGNAQLPAPNMLMVDRIVHISEVGGKYGKGELVAELDINPDLWFFACHFEGDPVMPGCLGLDAMWQLVGFYLGWQGNPGRGRALGSGEVKFFGQVLPTAKKVTYNIHIKRTINRSLILGIADGTVSVDGREIYSAESLRVGLFTSTDSF.

H70 is a catalytic residue.

It belongs to the thioester dehydratase family. FabA subfamily. Homodimer.

It localises to the cytoplasm. It catalyses the reaction a (3R)-hydroxyacyl-[ACP] = a (2E)-enoyl-[ACP] + H2O. The enzyme catalyses (3R)-hydroxydecanoyl-[ACP] = (2E)-decenoyl-[ACP] + H2O. It carries out the reaction (2E)-decenoyl-[ACP] = (3Z)-decenoyl-[ACP]. Its pathway is lipid metabolism; fatty acid biosynthesis. Its function is as follows. Necessary for the introduction of cis unsaturation into fatty acids. Catalyzes the dehydration of (3R)-3-hydroxydecanoyl-ACP to E-(2)-decenoyl-ACP and then its isomerization to Z-(3)-decenoyl-ACP. Can catalyze the dehydratase reaction for beta-hydroxyacyl-ACPs with saturated chain lengths up to 16:0, being most active on intermediate chain length. The sequence is that of 3-hydroxydecanoyl-[acyl-carrier-protein] dehydratase from Stutzerimonas stutzeri (strain A1501) (Pseudomonas stutzeri).